Here is a 567-residue protein sequence, read N- to C-terminus: Type II secretion system protein E (567 aa).

325 to 332 (GPTGSGKT) provides a ligand contact to ATP.

The protein belongs to the GSP E family. In terms of assembly, forms homooligomers; most probably hexamers. Interacts with XpsL/GspL.

It is found in the cell inner membrane. It catalyses the reaction ATP + H2O + cellular proteinSide 1 = ADP + phosphate + cellular proteinSide 2.. Its function is as follows. ATPase component of the type II secretion system required for the energy-dependent secretion of extracellular factors such as proteases and toxins from the periplasm. Acts as a molecular motor to provide the energy that is required for assembly of the pseudopilus and the extrusion of substrates generated in the cytoplasm. The sequence is that of Type II secretion system protein E (xpsE) from Xanthomonas campestris pv. campestris (strain ATCC 33913 / DSM 3586 / NCPPB 528 / LMG 568 / P 25).